We begin with the raw amino-acid sequence, 329 residues long: MGRPRRRGRDINGVLLLDKPLGLSSNDVLQKVKRLFSANRAGHTGALDPLATGMLPICLGEATKFSQFLLDSDKRYRVVARLGQRTDTSDAEGALISEREVNVTQAQMDAALDSFRGSSQQVPSMYSALKHQGKPLYEYARQGIEVEREARSITVYELLFIRWEGNDLELEIHCSKGTYIRTIIDDLGELLGCGAHVSYLRRLQVATYPSDRMVTLEQLTAIVETAQAEERSPNAELDALLLPMDSAVLNFPEVNLLPAVAAYVKQGQPVHVAGTPGEGMVRITEGEERNFIGIGTIAEDGRVAPKRLVVEHVDGANPVVAGVAAGNTP.

Residue histidine 43 coordinates substrate. Residue aspartate 48 is the Nucleophile of the active site. The substrate site is built by tyrosine 76, tyrosine 179, and leucine 200.

This sequence belongs to the pseudouridine synthase TruB family. Type 1 subfamily.

It carries out the reaction uridine(55) in tRNA = pseudouridine(55) in tRNA. Functionally, responsible for synthesis of pseudouridine from uracil-55 in the psi GC loop of transfer RNAs. In Yersinia enterocolitica serotype O:8 / biotype 1B (strain NCTC 13174 / 8081), this protein is tRNA pseudouridine synthase B.